The sequence spans 92 residues: Mediator-associated protein 3 (92 aa).

Residues 13–70 (KDLRRKIKKTVKKILESSNLYKITEIKAREEASLKLDLDLSQDPYKVIVKEEVENFLE) form the DEK-C domain.

In terms of assembly, associated with the Mediator complex.

The protein localises to the nucleus. In Arabidopsis thaliana (Mouse-ear cress), this protein is Mediator-associated protein 3.